Consider the following 206-residue polypeptide: 7-methyl-GTP pyrophosphatase (206 aa).

The Proton acceptor role is filled by Asp-82.

This sequence belongs to the Maf family. YceF subfamily. A divalent metal cation serves as cofactor.

The protein resides in the cytoplasm. The enzyme catalyses N(7)-methyl-GTP + H2O = N(7)-methyl-GMP + diphosphate + H(+). Nucleoside triphosphate pyrophosphatase that hydrolyzes 7-methyl-GTP (m(7)GTP). May have a dual role in cell division arrest and in preventing the incorporation of modified nucleotides into cellular nucleic acids. This Shewanella denitrificans (strain OS217 / ATCC BAA-1090 / DSM 15013) protein is 7-methyl-GTP pyrophosphatase.